Reading from the N-terminus, the 178-residue chain is Inner membrane-spanning protein YciB (178 aa).

5 helical membrane-spanning segments follow: residues 22-42 (IFYASGALIAATGLAVAMTYF), 50-70 (ASLITFIMVAVFGTLTLAFHS), 72-92 (LFIKWKVTVIYALFALALLGS), 121-141 (MAWALFFTACALANIYVAFWL), and 149-169 (FKVFGLTALTLVFTVLSVVYI).

Belongs to the YciB family.

Its subcellular location is the cell inner membrane. In terms of biological role, plays a role in cell envelope biogenesis, maintenance of cell envelope integrity and membrane homeostasis. The polypeptide is Inner membrane-spanning protein YciB (Photorhabdus laumondii subsp. laumondii (strain DSM 15139 / CIP 105565 / TT01) (Photorhabdus luminescens subsp. laumondii)).